The primary structure comprises 244 residues: uncharacterized protein (244 aa).

An N-terminal signal peptide occupies residues 1-18 (MQFSVLCKFLLLVTAVMA). Residues 19 to 223 (QTEYTPGFTT…TTIPSSAVHY (205 aa)) lie on the Lumenal side of the membrane. Composition is skewed to low complexity over residues 55–65 (ETSTHSVTSTN) and 75–128 (TSHN…TTHV). The tract at residues 55–128 (ETSTHSVTST…TTVVPPTTHV (74 aa)) is disordered. Residues 224–244 (ASPSGLLALVVMLISAFAFLA) traverse the membrane as a helical segment.

Its subcellular location is the endoplasmic reticulum membrane. This is an uncharacterized protein from Schizosaccharomyces pombe (strain 972 / ATCC 24843) (Fission yeast).